The following is a 277-amino-acid chain: S-formylglutathione hydrolase FrmB (277 aa).

Residues S145, D221, and H254 each act as charge relay system in the active site.

Belongs to the esterase D family.

The catalysed reaction is S-formylglutathione + H2O = formate + glutathione + H(+). In terms of biological role, serine hydrolase involved in the detoxification of formaldehyde. Hydrolyzes S-formylglutathione to glutathione and formate. The protein is S-formylglutathione hydrolase FrmB (frmB) of Escherichia coli (strain ATCC 8739 / DSM 1576 / NBRC 3972 / NCIMB 8545 / WDCM 00012 / Crooks).